A 155-amino-acid chain; its full sequence is uncharacterized protein (155 aa).

The tract at residues 1-34 is disordered; that stretch reads MESLQTPQHRENQDKREKEYGVKHMPMGNNAGNL. A compositionally biased stretch (basic and acidic residues) spans 8 to 22; sequence QHRENQDKREKEYGV. Residues 115-135 form a helical membrane-spanning segment; sequence MSLLLLPAFSGLTWAPFLFLF.

The protein resides in the membrane. This is an uncharacterized protein from Homo sapiens (Human).